Here is a 245-residue protein sequence, read N- to C-terminus: MAMTLSTKAFAQRGVSARKNTVRVYAASTKVNPKLASKTEVERFKQATGLPAPAINGKQFPLKLGFTKTNELFVGRLAMVGFSASLIGEILTGKGALAQFGYETGLNGIEVDGLVIGLIAFNLIAAVLPTSQTFVPEEQDTISERPAGPLQDPRITLLEPKKFFGVQGFGFTKENELFVGRAAQLGFAFSLIGEAVTGKGALAQFDIETGLSLRDTEFGLVVFILFLLFAAINEGSGKFVDEESA.

The transit peptide at 1-25 directs the protein to the chloroplast; the sequence is MAMTLSTKAFAQRGVSARKNTVRVY. Transmembrane regions (helical) follow at residues 72–92, 108–128, 185–205, and 217–237; these read LFVG…EILT, GIEV…AAVL, LGFA…LAQF, and EFGL…EGSG.

Belongs to the ELIP/psbS family.

The protein resides in the plastid. It localises to the chloroplast thylakoid membrane. Functionally, required for non-photochemical quenching (NPQ), a mechanism that converts and dissipates the harmful excess absorbed light energy into heat and protect the photosynthetic apparatus from photo-oxidative damage. Seems involved in the activation of NPQ, possibly by promoting conformational changes required for activation of LHCSR3-dependent quenching in the antenna of photosystem II (PSII). The chain is Photosystem II protein PSBS1 from Chlamydomonas reinhardtii (Chlamydomonas smithii).